The primary structure comprises 1275 residues: Myosin-1 (1275 aa).

The 693-residue stretch at 35–727 (VGVSDLTLLS…TLFAMEDMRD (693 aa)) folds into the Myosin motor domain. Residue 128–135 (GESGAGKT) participates in ATP binding. Ser361 carries the phosphoserine modification. An actin-binding region spans residues 410–493 (TIGILDIYGF…PGLFAALNDS (84 aa)). IQ domains lie at 731–751 (HNMAARIQRAWRRYVKRKEDA) and 752–777 (ARLIQNAWKVKKHGNQFEQLRDYGNG). Residues 785-974 (RRRMSMLGSR…KSGTVSVRPG (190 aa)) enclose the TH1 domain. Disordered regions lie at residues 966–1064 (SGTV…LNNN), 1089–1128 (QNHNSNPTAPSRPAKKAAPAPPVKKTAPPPPPSLSAAKPK), 1183–1230 (SECP…GGLS), and 1251–1275 (IADALKKRSATRDSDDEEEDDDDDW). Positions 977 to 992 (PDSQNPKRPRATSSKV) are enriched in polar residues. Positions 1095–1106 (PTAPSRPAKKAA) are enriched in low complexity. Pro residues predominate over residues 1107-1121 (PAPPVKKTAPPPPPS). In terms of domain architecture, SH3 spans 1127 to 1187 (PKWPTFKANY…PTAYISECPP (61 aa)). The span at 1254 to 1263 (ALKKRSATRD) shows a compositional bias: basic and acidic residues. Acidic residues predominate over residues 1264 to 1275 (SDDEEEDDDDDW).

The protein belongs to the TRAFAC class myosin-kinesin ATPase superfamily. Myosin family. Phosphorylation of the TEDS site (Ser-361) is required for the polarization of the actin cytoskeleton. Phosphorylation probably activates the myosin-I ATPase activity.

Its subcellular location is the cytoplasm. It localises to the cytoskeleton. It is found in the actin patch. In terms of biological role, type-I myosin implicated in the organization of the actin cytoskeleton. Required for proper actin cytoskeleton polarization. At the cell cortex, assembles in patch-like structures together with proteins from the actin-polymerizing machinery and promotes actin assembly. Functions as actin nucleation-promoting factor (NPF) for the Arp2/3 complex. The polypeptide is Myosin-1 (MYO1) (Meyerozyma guilliermondii (strain ATCC 6260 / CBS 566 / DSM 6381 / JCM 1539 / NBRC 10279 / NRRL Y-324) (Yeast)).